A 679-amino-acid chain; its full sequence is MPRVKAVKKQAEALASEPTDPTPNANGNGVDENADSAAEELKVPAKGKPRARKATKTAVSAENSEEVEPQKAPTAAARGKKKQPKDTDENGQMEVVAKPKGRAKKATAEAEPEPKVDLPAGKATKPRAKKEPTPAPDEVTSSPPKGRAKAEKPTNAQAKGRKRKELPAEANGGAEEAAEPPKQRARKEAVPTLKEQAEPGTISKEKVQKAETAAKRARGTKRLADSEIAAALDEPEVDEVPPKAASKRAKKGKMVEPSPETVGDFQSVQEEVESPPKTAAAPKKRAKKTTNGETAVELEPKTKAKPTKQRAKKEGKEPAPGKKQKKSADKENGVVEEEAKPSTETKPAKGRKKAPVKAEDVEDIEEAAEESKPARGRKKAAAKAEEPDVDEESGSKTTKKAKKAETKTTVTLDKDAFALPADKEFNLKICSWNVAGLRAWLKKDGLQLIDLEEPDIFCLQETKCANDQLPEEVTRLPGYHPYWLCMPGGYAGVAIYSKIMPIHVEYGIGNEEFDDVGRMITAEYEKFYLINVYVPNSGRKLVNLEPRMRWEKLFQAYVKKLDALKPVVICGDMNVSHMPIDLENPKNNTKNAGFTQEERDKMTELLGLGFVDTFRHLYPDRKGAYTFWTYMANARARNVGWRLDYCLVSERFVPKVVEHEIRSQCLGSDHCPITIFFNI.

A disordered region spans residues 1–407 (MPRVKAVKKQ…TKKAKKAETK (407 aa)). Positions 45-55 (AKGKPRARKAT) are enriched in basic residues. A compositionally biased stretch (basic and acidic residues) spans 106-116 (ATAEAEPEPKV). Phosphothreonine occurs at positions 133 and 140. Residue S142 is modified to Phosphoserine. Basic and acidic residues-rich tracts occupy residues 179 to 189 (EPPKQRARKEA) and 203 to 214 (SKEKVQKAETAA). Position 258 is a phosphoserine (S258). Positions 312–347 (KKEGKEPAPGKKQKKSADKENGVVEEEAKPSTETKP) are enriched in basic and acidic residues. The tract at residues 428–679 (KICSWNVAGL…HCPITIFFNI (252 aa)) is AP endonuclease. Mg(2+) is bound at residue E461. Y533 is an active-site residue. D572, N574, and D669 together coordinate Mg(2+). D572 serves as the catalytic Proton donor/acceptor.

It belongs to the DNA repair enzymes AP/ExoA family. As to quaternary structure, interacts with the zeta DNA polymerase complex; interacts (via the N-terminus) with the accessory subunit PolZ2/Rev7 and also interacts with the catalytic component PolZ1, however the interaction with PolZ1 is likely via PolZ2. The cofactor is Mg(2+). Mn(2+) is required as a cofactor.

It localises to the nucleus. It carries out the reaction Exonucleolytic cleavage in the 3'- to 5'-direction to yield nucleoside 5'-phosphates.. Plays a role in the cellular response to oxidative stress by promoting DNA repair mechanisms such as base excision repair and possibly homologous recombination repair. Functions as an apurinic/apyrimidinic (AP) endodeoxyribonuclease in the DNA base excision repair (BER) pathway of DNA lesions induced by oxidative and alkylating agents. Likely to initiate repair of AP sites in DNA by catalyzing hydrolytic incision of the phosphodiester backbone immediately adjacent to the damage, generating a single-strand break with 5'-deoxyribose phosphate and 3'-hydroxyl ends. Has a 3'-5' exoribonuclease activity on mismatched deoxyribonucleotides at the 3' termini of nicked or gapped DNA molecules during short-patch BER. Has apurinic endonuclease and double-stranded DNA 3'-exonuclease activities and carries out single-stranded DNA renaturation in a Mg(2+)-dependent manner. Activity is more efficient in purine-rich regions of dsDNA than in pyrimidine-rich regions. This is Recombination repair protein 1 from Drosophila melanogaster (Fruit fly).